The chain runs to 333 residues: MGRKRGRDIDGWLILDKPLGPTSTDMVNKLRWAFDAKKAGHGGTLDPLASGVLPIAFGKATRTIPYIMDATKRYRFTLTFGESRTTDDLEGEVLATSPNRPTDDQIRAVLPALTGNVMQVPPVFSALRVGGERAYDMARAGRPPELPPRPARIDSITLVERPDANTAVFDVQSGKGVYMRSLARDIALACGTVGHISVLRRTKCGPFDLSHALTIDQISLDKSTQTVDNADALPAPLLDAATALVDIPALAVTDAEGRMLVWGQSIDPADLVHPLPASSQGEDHLWRAMIGEHVLGLCHVRHGRLRAARMLENHEFFGEHDVDYRRTPHGTDF.

The active-site Nucleophile is the aspartate 46.

This sequence belongs to the pseudouridine synthase TruB family. Type 1 subfamily.

The enzyme catalyses uridine(55) in tRNA = pseudouridine(55) in tRNA. Its function is as follows. Responsible for synthesis of pseudouridine from uracil-55 in the psi GC loop of transfer RNAs. The polypeptide is tRNA pseudouridine synthase B (Gluconobacter oxydans (strain 621H) (Gluconobacter suboxydans)).